A 741-amino-acid chain; its full sequence is NAD(P)H-quinone oxidoreductase subunit 5, chloroplastic (741 aa).

16 consecutive transmembrane segments (helical) span residues 9–29 (WIIP…LLLF), 40–60 (WAFQ…NLSI), 89–109 (IDPL…LVLI), 125–145 (FAYM…SNLI), 147–167 (IYIF…FWFT), 185–205 (GDFG…SFEF), 219–239 (NEVN…GAIA), 258–278 (TPIS…FLVA), 283–303 (LFIV…ITVF), 327–347 (LGYM…FHLI), 354–374 (ALLF…VGYC), 396–416 (NSFL…CFWS), 425–445 (WLYS…TAFY), 549–569 (LFPI…GIHF), 605–625 (VFSV…YKPV), and 721–741 (YLFF…FVNL).

It belongs to the complex I subunit 5 family. NDH is composed of at least 16 different subunits, 5 of which are encoded in the nucleus.

Its subcellular location is the plastid. It is found in the chloroplast thylakoid membrane. It carries out the reaction a plastoquinone + NADH + (n+1) H(+)(in) = a plastoquinol + NAD(+) + n H(+)(out). The enzyme catalyses a plastoquinone + NADPH + (n+1) H(+)(in) = a plastoquinol + NADP(+) + n H(+)(out). Its function is as follows. NDH shuttles electrons from NAD(P)H:plastoquinone, via FMN and iron-sulfur (Fe-S) centers, to quinones in the photosynthetic chain and possibly in a chloroplast respiratory chain. The immediate electron acceptor for the enzyme in this species is believed to be plastoquinone. Couples the redox reaction to proton translocation, and thus conserves the redox energy in a proton gradient. This is NAD(P)H-quinone oxidoreductase subunit 5, chloroplastic (ndhF) from Pentatrichia integra (Rock-climbing daisy).